A 515-amino-acid chain; its full sequence is Cytochrome P450 monooxygenase ptmJ (515 aa).

4 consecutive transmembrane segments (helical) span residues 6–26 (LGPF…LFVI), 50–70 (LGVV…LFCV), 82–102 (VFYL…EPVV), and 300–320 (VIIL…LFLH). Cys449 provides a ligand contact to heme.

It belongs to the cytochrome P450 family. The cofactor is heme.

The protein resides in the membrane. It participates in secondary metabolite biosynthesis. In terms of biological role, cytochrome P450 monooxygenase; part of the gene cluster that mediates the biosynthesis of the indole diterpenes penitrems. The geranylgeranyl diphosphate (GGPP) synthase ptmG catalyzes the first step in penitrem biosynthesis via conversion of farnesyl pyrophosphate and isopentyl pyrophosphate into geranylgeranyl pyrophosphate (GGPP). Condensation of indole-3-glycerol phosphate with GGPP by the prenyl transferase ptmC then forms 3-geranylgeranylindole (3-GGI). Epoxidation by the FAD-dependent monooxygenase ptmM leads to a epoxidized-GGI that is substrate of the terpene cyclase ptmB for cyclization to yield paspaline. Paspaline is subsequently converted to 13-desoxypaxilline by the cytochrome P450 monooxygenase ptmP, the latter being then converted to paxilline by the cytochrome P450 monooxygenase ptmQ. Paxilline is converted to beta-paxitriol via C-10 ketoreduction by the short-chain dehydrogenase ptmH which can be monoprenylated at the C-20 by the indole diterpene prenyltransferase ptmD. A two-step elimination (acetylation and elimination) process performed by the O-acetyltransferase ptmV and ptmI leads to the production of the prenylated form of penijanthine. The FAD-linked oxidoreductase ptmO then converts the prenylated form of penijanthine into PC-M5 which is in turn transformed into PC-M4 by the aromatic dimethylallyltransferase ptmE. Five sequential oxidative transformations performed by the cytochrome P450 monooxygenases ptmK, ptmU, ptmL, ptmN and ptmJ yield the various penitrem compounds. PtmK, ptmU and ptmM are involved in the formation of the key bicyclic ring of penitrem C via the formation of the intermediates secopenitrem D and penitrem D. PtmL catalyzes the epoxidation of penitrem D and C to yield penitrem B and F, respectively. PtmJ catalyzes the last benzylic hydroxylation to convert penitrem B to prenitrem E and penitrem F to penitrem A. This Penicillium ochrochloron protein is Cytochrome P450 monooxygenase ptmJ.